A 309-amino-acid chain; its full sequence is MATELQCPDSMPCHNQQVNSASTPSPEQLRPGDLILDHAGGNRASRAKVILLTGYAHSSLPAELDSGACGGSSLNSEGNSGSGDSSSYDAPAGNSFLEDCELSRQIGAQLKLLPMNDQIRELQTIIRDKTASRGDFMFSADRLIRLVVEEGLNQLPYKECMVTTPTGYKYEGVKFEKGNCGVSIMRSGEAMEQGLRDCCRSIRIGKILIQSDEETQRAKVYYAKFPPDIYRRKVLLMYPILSTGNTVIEAVKVLIEHGVQPSVIILLSLFSTPHGAKSIIQEFPEITILTTEVHPVAPTHFGQKYFGTD.

Positions 1–38 (MATELQCPDSMPCHNQQVNSASTPSPEQLRPGDLILDH) are disordered. Residues 13 to 26 (CHNQQVNSASTPSP) show a composition bias toward polar residues. Phosphoserine is present on serine 25. GTP is bound by residues arginine 133, arginine 142, and 176 to 179 (EKGN). Arginine 186 is a binding site for 5-phospho-alpha-D-ribose 1-diphosphate. 2 residues coordinate GTP: arginine 203 and arginine 232. 238–246 (YPILSTGNT) is a binding site for 5-phospho-alpha-D-ribose 1-diphosphate. 299 to 301 (THF) is a binding site for uracil.

This sequence belongs to the UPRTase family. As to expression, highly expressed in leukocytes, liver, spleen and thymus, with lower expression in brain, lung and skeletal muscle.

The protein localises to the cytoplasm. The protein resides in the nucleus. The chain is Uracil phosphoribosyltransferase homolog (UPRT) from Homo sapiens (Human).